A 542-amino-acid chain; its full sequence is CTP synthase (542 aa).

Residues 1-265 (MTRYIFVTGG…DQLVIERFGL (265 aa)) form an amidoligase domain region. Ser-13 contacts CTP. Ser-13 is a UTP binding site. ATP is bound by residues 14 to 19 (SLGKGI) and Asp-71. Asp-71 and Glu-139 together coordinate Mg(2+). CTP is bound by residues 146–148 (DIE), 186–191 (KTKPTQ), and Lys-222. UTP-binding positions include 186-191 (KTKPTQ) and Lys-222. Residues 290 to 541 (TIAMVGKYME…VEAALANKKG (252 aa)) enclose the Glutamine amidotransferase type-1 domain. Residue Gly-351 participates in L-glutamine binding. Residue Cys-378 is the Nucleophile; for glutamine hydrolysis of the active site. L-glutamine is bound by residues 379–382 (LGMQ), Glu-402, and Arg-469. Residues His-514 and Glu-516 contribute to the active site.

It belongs to the CTP synthase family. As to quaternary structure, homotetramer.

The catalysed reaction is UTP + L-glutamine + ATP + H2O = CTP + L-glutamate + ADP + phosphate + 2 H(+). It catalyses the reaction L-glutamine + H2O = L-glutamate + NH4(+). The enzyme catalyses UTP + NH4(+) + ATP = CTP + ADP + phosphate + 2 H(+). The protein operates within pyrimidine metabolism; CTP biosynthesis via de novo pathway; CTP from UDP: step 2/2. Its activity is regulated as follows. Allosterically activated by GTP, when glutamine is the substrate; GTP has no effect on the reaction when ammonia is the substrate. The allosteric effector GTP functions by stabilizing the protein conformation that binds the tetrahedral intermediate(s) formed during glutamine hydrolysis. Inhibited by the product CTP, via allosteric rather than competitive inhibition. Its function is as follows. Catalyzes the ATP-dependent amination of UTP to CTP with either L-glutamine or ammonia as the source of nitrogen. Regulates intracellular CTP levels through interactions with the four ribonucleotide triphosphates. The protein is CTP synthase of Marinobacter nauticus (strain ATCC 700491 / DSM 11845 / VT8) (Marinobacter aquaeolei).